A 60-amino-acid chain; its full sequence is Ixodegrin-like peptide (60 aa).

The signal sequence occupies residues Met-1 to Ala-19. The Cell attachment site signature appears at Arg-49–Asp-51.

The protein belongs to the ixodegrin family. Contains 3 disulfide bonds. In terms of tissue distribution, expressed in salivary glands.

It localises to the secreted. In terms of biological role, tick salivary platelet aggregation inhibitor that plays an important part in the anti-hemostatic strategy of ticks. Inhibits platelet aggregation induced by ADP, thrombin and thromboxane A2 (TXA2). Blocks platelet adhesion to soluble collagen (most probably through the binding to alpha-2/beta-1 integrin (ITGA2/ITGB1)) and binds to purified glycoprotein IIb/IIIa (ITGA2B/ITGB3) in a dose-dependent manner. In vivo, reduces thrombus weight effectively in a rat arteriovenous shunt model and inhibits thrombosis in a carrageenan-induced mouse tail thrombosis model. This chain is Ixodegrin-like peptide, found in Ixodes scapularis (Black-legged tick).